The chain runs to 97 residues: Coiled-coil domain-containing protein 167 (97 aa).

Positions 10-79 (GVALEIDGLE…LRQENRKNML (70 aa)) form a coiled coil. A helical membrane pass occupies residues 78–95 (MLLSVAIFILLTLVYAYW).

Its subcellular location is the membrane. This is Coiled-coil domain-containing protein 167 (CCDC167) from Homo sapiens (Human).